Reading from the N-terminus, the 140-residue chain is Large ribosomal subunit protein uL11 (140 aa).

The protein belongs to the universal ribosomal protein uL11 family. In terms of assembly, part of the ribosomal stalk of the 50S ribosomal subunit. Interacts with L10 and the large rRNA to form the base of the stalk. L10 forms an elongated spine to which L12 dimers bind in a sequential fashion forming a multimeric L10(L12)X complex. One or more lysine residues are methylated.

Functionally, forms part of the ribosomal stalk which helps the ribosome interact with GTP-bound translation factors. This Gemmatimonas aurantiaca (strain DSM 14586 / JCM 11422 / NBRC 100505 / T-27) protein is Large ribosomal subunit protein uL11.